The chain runs to 915 residues: Probable dipeptidyl-aminopeptidase B (915 aa).

2 disordered regions span residues 1–20 (MAGE…TRGS) and 52–74 (QDSR…NEEE). At 1-95 (MAGEKGGSRD…GGKTVQKTTK (95 aa)) the chain is on the cytoplasmic side. Residues 55 to 72 (RLGEKDQRDDDHDQYRNE) are compositionally biased toward basic and acidic residues. A helical; Signal-anchor for type II membrane protein membrane pass occupies residues 96-116 (IVLWALLFLCVGGWSLAFVIF). Residues 117–915 (LFRGHDTPQT…RAETWGGLPV (799 aa)) are Vacuolar-facing. Residues Asn133, Asn179, Asn349, and Asn572 are each glycosylated (N-linked (GlcNAc...) asparagine). Catalysis depends on Ser754, which acts as the Charge relay system. Asn813 carries an N-linked (GlcNAc...) asparagine glycan. Catalysis depends on charge relay system residues Asp831 and His864. A glycan (N-linked (GlcNAc...) asparagine) is linked at Asn900.

The protein belongs to the peptidase S9B family.

The protein resides in the vacuole membrane. The enzyme catalyses Release of an N-terminal dipeptide, Xaa-Yaa-|-Zaa-, from a polypeptide, preferentially when Yaa is Pro, provided Zaa is neither Pro nor hydroxyproline.. Its function is as follows. Type IV dipeptidyl-peptidase which removes N-terminal dipeptides sequentially from polypeptides having unsubstituted N-termini provided that the penultimate residue is proline. The polypeptide is Probable dipeptidyl-aminopeptidase B (DAPB) (Blastomyces gilchristii (strain SLH14081) (Blastomyces dermatitidis)).